The chain runs to 224 residues: Deoxyribose-phosphate aldolase (224 aa).

Catalysis depends on Asp-92, which acts as the Proton donor/acceptor. Catalysis depends on Lys-155, which acts as the Schiff-base intermediate with acetaldehyde. Residue Lys-184 is the Proton donor/acceptor of the active site.

The protein belongs to the DeoC/FbaB aldolase family. DeoC type 1 subfamily.

Its subcellular location is the cytoplasm. The catalysed reaction is 2-deoxy-D-ribose 5-phosphate = D-glyceraldehyde 3-phosphate + acetaldehyde. It functions in the pathway carbohydrate degradation; 2-deoxy-D-ribose 1-phosphate degradation; D-glyceraldehyde 3-phosphate and acetaldehyde from 2-deoxy-alpha-D-ribose 1-phosphate: step 2/2. Its function is as follows. Catalyzes a reversible aldol reaction between acetaldehyde and D-glyceraldehyde 3-phosphate to generate 2-deoxy-D-ribose 5-phosphate. The sequence is that of Deoxyribose-phosphate aldolase from Clostridium perfringens (strain ATCC 13124 / DSM 756 / JCM 1290 / NCIMB 6125 / NCTC 8237 / Type A).